The chain runs to 274 residues: Ribulose-phosphate 3-epimerase, chloroplastic (274 aa).

The transit peptide at 1–39 (MASPSSSSSLCSTFASPRAASLGRRLAFSSPRKAFRVRA) directs the protein to the chloroplast. Residue S56 coordinates substrate. A divalent metal cation is bound by residues H81, D83, and H114. D83 functions as the Proton acceptor in the catalytic mechanism. Substrate is bound by residues H114, 192-195 (GFGG), 225-227 (DGG), and 247-248 (GS). D225 provides a ligand contact to a divalent metal cation. Residue D225 is the Proton donor of the active site.

This sequence belongs to the ribulose-phosphate 3-epimerase family. In terms of assembly, homooctamer. Requires Co(2+) as cofactor. Fe(2+) is required as a cofactor. Mn(2+) serves as cofactor. It depends on Zn(2+) as a cofactor.

Its subcellular location is the plastid. It localises to the chloroplast thylakoid membrane. The enzyme catalyses D-ribulose 5-phosphate = D-xylulose 5-phosphate. It participates in carbohydrate biosynthesis; Calvin cycle. Functionally, catalyzes the reversible epimerization of D-ribulose 5-phosphate to D-xylulose 5-phosphate. In Oryza sativa subsp. japonica (Rice), this protein is Ribulose-phosphate 3-epimerase, chloroplastic (RPE).